The primary structure comprises 270 residues: Putative phosphoenolpyruvate synthase regulatory protein (270 aa).

154–161 is an ADP binding site; that stretch reads GVSRAGKT.

This sequence belongs to the pyruvate, phosphate/water dikinase regulatory protein family. PSRP subfamily.

It catalyses the reaction [pyruvate, water dikinase] + ADP = [pyruvate, water dikinase]-phosphate + AMP + H(+). The enzyme catalyses [pyruvate, water dikinase]-phosphate + phosphate + H(+) = [pyruvate, water dikinase] + diphosphate. In terms of biological role, bifunctional serine/threonine kinase and phosphorylase involved in the regulation of the phosphoenolpyruvate synthase (PEPS) by catalyzing its phosphorylation/dephosphorylation. This is Putative phosphoenolpyruvate synthase regulatory protein from Deinococcus geothermalis (strain DSM 11300 / CIP 105573 / AG-3a).